A 249-amino-acid chain; its full sequence is Probable septum site-determining protein MinC (249 aa).

A disordered region spans residues 116–149 (AAVSPPPPPPPPPARAEPAAPVARPAPGRMQRNA). Positions 119–130 (SPPPPPPPPPAR) are enriched in pro residues. A compositionally biased stretch (low complexity) spans 131 to 142 (AEPAAPVARPAP).

It belongs to the MinC family. In terms of assembly, interacts with MinD and FtsZ.

Its function is as follows. Cell division inhibitor that blocks the formation of polar Z ring septums. Rapidly oscillates between the poles of the cell to destabilize FtsZ filaments that have formed before they mature into polar Z rings. Prevents FtsZ polymerization. In Xanthomonas campestris pv. campestris (strain B100), this protein is Probable septum site-determining protein MinC.